The sequence spans 41 residues: Large ribosomal subunit protein bL36 (41 aa).

This sequence belongs to the bacterial ribosomal protein bL36 family.

This is Large ribosomal subunit protein bL36 from Sinorhizobium medicae (strain WSM419) (Ensifer medicae).